The following is a 217-amino-acid chain: Thiamine-phosphate synthase (217 aa).

4-amino-2-methyl-5-(diphosphooxymethyl)pyrimidine is bound by residues 45–49 and N81; that span reads QFRQK. Mg(2+) contacts are provided by D82 and D101. S120 is a binding site for 4-amino-2-methyl-5-(diphosphooxymethyl)pyrimidine. 147-149 lines the 2-[(2R,5Z)-2-carboxy-4-methylthiazol-5(2H)-ylidene]ethyl phosphate pocket; it reads TPS. K150 lines the 4-amino-2-methyl-5-(diphosphooxymethyl)pyrimidine pocket. 2-[(2R,5Z)-2-carboxy-4-methylthiazol-5(2H)-ylidene]ethyl phosphate is bound by residues G179 and 197–198; that span reads IS.

This sequence belongs to the thiamine-phosphate synthase family. It depends on Mg(2+) as a cofactor.

It catalyses the reaction 2-[(2R,5Z)-2-carboxy-4-methylthiazol-5(2H)-ylidene]ethyl phosphate + 4-amino-2-methyl-5-(diphosphooxymethyl)pyrimidine + 2 H(+) = thiamine phosphate + CO2 + diphosphate. It carries out the reaction 2-(2-carboxy-4-methylthiazol-5-yl)ethyl phosphate + 4-amino-2-methyl-5-(diphosphooxymethyl)pyrimidine + 2 H(+) = thiamine phosphate + CO2 + diphosphate. The catalysed reaction is 4-methyl-5-(2-phosphooxyethyl)-thiazole + 4-amino-2-methyl-5-(diphosphooxymethyl)pyrimidine + H(+) = thiamine phosphate + diphosphate. It functions in the pathway cofactor biosynthesis; thiamine diphosphate biosynthesis; thiamine phosphate from 4-amino-2-methyl-5-diphosphomethylpyrimidine and 4-methyl-5-(2-phosphoethyl)-thiazole: step 1/1. Functionally, condenses 4-methyl-5-(beta-hydroxyethyl)thiazole monophosphate (THZ-P) and 2-methyl-4-amino-5-hydroxymethyl pyrimidine pyrophosphate (HMP-PP) to form thiamine monophosphate (TMP). The chain is Thiamine-phosphate synthase from Helicobacter pylori (strain J99 / ATCC 700824) (Campylobacter pylori J99).